Here is a 184-residue protein sequence, read N- to C-terminus: Probable chemoreceptor glutamine deamidase CheD (184 aa).

It belongs to the CheD family.

The enzyme catalyses L-glutaminyl-[protein] + H2O = L-glutamyl-[protein] + NH4(+). In terms of biological role, probably deamidates glutamine residues to glutamate on methyl-accepting chemotaxis receptors (MCPs), playing an important role in chemotaxis. The polypeptide is Probable chemoreceptor glutamine deamidase CheD (Rhizobium etli (strain CIAT 652)).